Reading from the N-terminus, the 328-residue chain is Alcohol-sensitive RING finger protein 1 (328 aa).

The segment at 18–61 adopts an RING-type 1; atypical zinc-finger fold; sequence CSICWESMPSGVGRLMPCGHEYHLACIRKWFHLHSGNRSCPVCR. The RING-type 2; atypical zinc-finger motif lies at 129 to 177; the sequence is CGICGEMNGDIDTCCNRCHHMYHHSCLGQLLVEVNAEREQGWSHCIFCY.

The protein localises to the cytoplasm. The protein resides in the nucleus. In terms of biological role, required for tolerance to alcohol. The polypeptide is Alcohol-sensitive RING finger protein 1 (ASR1) (Eremothecium gossypii (strain ATCC 10895 / CBS 109.51 / FGSC 9923 / NRRL Y-1056) (Yeast)).